Consider the following 334-residue polypeptide: Probable N5-carboxyaminoimidazole ribonucleotide mutase (334 aa).

Substrate contacts are provided by Ser11, Asp14, and Arg41.

Belongs to the AIR carboxylase family. Class I subfamily.

It carries out the reaction 5-carboxyamino-1-(5-phospho-D-ribosyl)imidazole + H(+) = 5-amino-1-(5-phospho-D-ribosyl)imidazole-4-carboxylate. It participates in purine metabolism; IMP biosynthesis via de novo pathway; 5-amino-1-(5-phospho-D-ribosyl)imidazole-4-carboxylate from 5-amino-1-(5-phospho-D-ribosyl)imidazole (N5-CAIR route): step 2/2. In terms of biological role, catalyzes the conversion of N5-carboxyaminoimidazole ribonucleotide (N5-CAIR) to 4-carboxy-5-aminoimidazole ribonucleotide (CAIR). The protein is Probable N5-carboxyaminoimidazole ribonucleotide mutase of Methanothermobacter thermautotrophicus (strain ATCC 29096 / DSM 1053 / JCM 10044 / NBRC 100330 / Delta H) (Methanobacterium thermoautotrophicum).